The primary structure comprises 386 residues: MGMQMKNSKKMMTLMALCLSVAITTSGYATTLPDIPEPLKNGTGAIDNNGVIYVGLGSAGTSWYKIDLKKQHKDWERIKSFPGGAREQSVSVFLNGELYVFGGVGKESNEAPLQVYSDVYKYTPAKNTWQKVNTISPVGLTGHTVVKLNETMALITGGVNEHIFDKYFIDIAAAAGDDSEKNRVIYNYFNKPSKDYFFNKIVFIYNAKENTWENAGELPGAGTAGSSSAMENNSLTLINGELKPGLRTDVIYRAIWDNDKLTWLKNSQLPPSPGEQHQEGLAGAFSGYSQGVLLVGGGANFPGAKQNYTDGKFYAHEGINKKWRDEVYGLINGHWQYVGKMKQPLGYGVSVNYGDEIFLIGGENAKGKPVSSVISFAMHDGKLLIE.

The signal sequence occupies residues 1–29 (MGMQMKNSKKMMTLMALCLSVAITTSGYA). 7 Kelch repeats span residues 51-95 (VIYV…VFLN), 97-149 (ELYV…VKLN), 151-186 (TMALITGGVNEHIFDKYFIDIAAAAGDDSEKNRVIY), 187-232 (NYFN…AMEN), 235-284 (LTLI…LAGA), 306-355 (QNYT…NYGD), and 357-386 (IFLIGGENAKGKPVSSVISFAMHDGKLLIE). The Proton acceptor role is filled by glutamate 241.

Belongs to the NanM family. In terms of assembly, homodimer.

It localises to the periplasm. The catalysed reaction is N-acetyl-alpha-neuraminate = N-acetyl-beta-neuraminate. In terms of biological role, converts alpha-N-acetylneuranimic acid (Neu5Ac) to the beta-anomer, accelerating the equilibrium between the alpha- and beta-anomers. Probably facilitates sialidase-negative bacteria to compete successfully for limited amounts of extracellular Neu5Ac, which is likely taken up in the beta-anomer. In addition, the rapid removal of sialic acid from solution might be advantageous to the bacterium to damp down host responses. The sequence is that of N-acetylneuraminate epimerase from Salmonella arizonae (strain ATCC BAA-731 / CDC346-86 / RSK2980).